Here is a 317-residue protein sequence, read N- to C-terminus: Flavin-dependent thymidylate synthase (317 aa).

Serine 46 contacts FAD. Positions 55-166 are insert; that stretch reads FEWKKEKWIE…ELETDMDFYT (112 aa). A ThyX domain is found at 100–317; the sequence is AVKERIKEAF…YRGTDKKNVI (218 aa). DUMP contacts are provided by residues 178 to 181, 189 to 193, and arginine 259; these read QWMR and EVSKR. Residues 181–183 and glutamate 189 each bind FAD; that span reads RHR. A ThyX motif motif is present at residues 181-191; that stretch reads RHRFGSYNEVS. Asparagine 281 provides a ligand contact to FAD. Arginine 286 serves as a coordination point for dUMP. The active-site Involved in ionization of N3 of dUMP, leading to its activation is arginine 286.

It belongs to the thymidylate synthase ThyX family. As to quaternary structure, homotetramer. Requires FAD as cofactor.

It catalyses the reaction dUMP + (6R)-5,10-methylene-5,6,7,8-tetrahydrofolate + NADPH + H(+) = dTMP + (6S)-5,6,7,8-tetrahydrofolate + NADP(+). It functions in the pathway pyrimidine metabolism; dTTP biosynthesis. Functionally, catalyzes the reductive methylation of 2'-deoxyuridine-5'-monophosphate (dUMP) to 2'-deoxythymidine-5'-monophosphate (dTMP) while utilizing 5,10-methylenetetrahydrofolate (mTHF) as the methyl donor, and NADPH and FADH(2) as the reductant. This is Flavin-dependent thymidylate synthase from Aquifex aeolicus (strain VF5).